The chain runs to 293 residues: Amine sulfotransferase (293 aa).

A 3'-phosphoadenylyl sulfate-binding site is contributed by 46 to 51 (KSGTIW). Catalysis depends on His-101, which acts as the Proton acceptor. Residues Arg-123, Ser-131, 220–225 (ATFQKM), and 252–254 (RKG) each bind 3'-phosphoadenylyl sulfate.

Belongs to the sulfotransferase 1 family.

The protein localises to the cytoplasm. It catalyses the reaction a primary amine + 3'-phosphoadenylyl sulfate = a sulfamate + adenosine 3',5'-bisphosphate + 2 H(+). In terms of biological role, sulfotransferase that utilizes 3'-phospho-5'-adenylyl sulfate (PAPS) as sulfonate donor to catalyze the N-sulfonation of amines. The polypeptide is Amine sulfotransferase (Sult3a1) (Mus musculus (Mouse)).